The following is a 3080-amino-acid chain: Adhesion G-protein coupled receptor G4 (3080 aa).

The signal sequence occupies residues methionine 1–serine 27. Over leucine 28–glutamate 2740 the chain is Extracellular. In terms of domain architecture, Pentraxin (PTX) spans lysine 29–cysteine 228. Disulfide bonds link cysteine 58–cysteine 123 and cysteine 200–cysteine 228. Residue aspartate 202 coordinates Mg(2+). N-linked (GlcNAc...) asparagine glycans are attached at residues asparagine 233, asparagine 487, asparagine 836, and asparagine 899. Residues serine 946–threonine 959 are compositionally biased toward polar residues. The interval serine 946–proline 965 is disordered. N-linked (GlcNAc...) asparagine glycosylation occurs at asparagine 1020. Positions valine 1274 to threonine 1348 are disordered. Polar residues-rich tracts occupy residues methionine 1277–methionine 1296, threonine 1305–proline 1315, and serine 1324–threonine 1348. The N-linked (GlcNAc...) asparagine glycan is linked to asparagine 1519. Over residues serine 2109 to threonine 2139 the composition is skewed to polar residues. The segment at serine 2109–serine 2141 is disordered. 2 N-linked (GlcNAc...) asparagine glycosylation sites follow: asparagine 2361 and asparagine 2640. In terms of domain architecture, GAIN-B spans methionine 2578–threonine 2734. 2 cysteine pairs are disulfide-bonded: cysteine 2685–cysteine 2716 and cysteine 2704–cysteine 2718. Residues cysteine 2685–threonine 2734 are GPS. The tract at residues histidine 2723–threonine 2734 is stachel. The helical transmembrane segment at glutamine 2741 to isoleucine 2766 threads the bilayer. Residues alanine 2767–alanine 2777 are Cytoplasmic-facing. A helical membrane pass occupies residues lysine 2778–leucine 2800. At serine 2801–valine 2806 the chain is on the extracellular side. Residues glycine 2807–tyrosine 2835 form a helical membrane-spanning segment. Cysteines 2809 and 2886 form a disulfide. The Cytoplasmic segment spans residues leucine 2836–tyrosine 2849. A helical transmembrane segment spans residues isoleucine 2850–serine 2870. The Extracellular portion of the chain corresponds to valine 2871–serine 2892. A helical membrane pass occupies residues isoleucine 2893–valine 2918. Over glutamine 2919–histidine 2937 the chain is Cytoplasmic. Residues aspartate 2938 to glycine 2961 form a helical membrane-spanning segment. Over proline 2962–asparagine 2965 the chain is Extracellular. The helical transmembrane segment at phenylalanine 2966–methionine 2989 threads the bilayer. Topologically, residues lysine 2990–proline 3080 are cytoplasmic. A compositionally biased stretch (polar residues) spans phenylalanine 3051–serine 3065. Residues phenylalanine 3051–proline 3080 form a disordered region.

The protein belongs to the G-protein coupled receptor 2 family. Adhesion G-protein coupled receptor (ADGR) subfamily. Homodimer; homodimerizes via its Pentraxin domain in a calcium-independent manner. Heterodimer of 2 chains generated by proteolytic processing; the large extracellular N-terminal fragment and the membrane-bound C-terminal fragment predominantly remain associated and non-covalently linked. Autoproteolytically processed at the GPS region of the GAIN-B domain; this cleavage modulates receptor activity. In terms of processing, N-glycosylated. Detected in fetal retina. Highly expressed in normal enterochromaffin cells and in neuroendocrine carcinoma. Detected in normal liver; highly expressed in primary liver carcinoma.

It is found in the membrane. With respect to regulation, forms a heterodimer of 2 chains generated by proteolytic processing that remain associated through non-covalent interactions mediated by the GAIN-B domain. In the inactivated receptor, the Stachel sequence (also named stalk) is embedded in the GAIN-B domain, where it adopts a beta-strand conformation. On activation, the Stachel moves into the 7 transmembrane region and adopts a twisted hook-shaped configuration that forms contacts within the receptor, leading to coupling of a G-alpha protein, which activates signaling. The cleaved GAIN-B and N-terminal domains can then dissociate from the rest of the receptor. In terms of biological role, orphan adhesion G-protein coupled receptor (aGPCR). Ligand binding causes a conformation change that triggers signaling via guanine nucleotide-binding proteins (G proteins) and modulates the activity of downstream effectors, such as adenylate cyclase. ADGRG4 is coupled to G(s) G proteins and mediates activation of adenylate cyclase activity. May be act as sensor of mechanical forces. The sequence is that of Adhesion G-protein coupled receptor G4 from Homo sapiens (Human).